The following is a 206-amino-acid chain: Small ribosomal subunit protein uS4 (206 aa).

The region spanning 96–156 (GRLDNVVYRM…EKSKKQARIK (61 aa)) is the S4 RNA-binding domain.

It belongs to the universal ribosomal protein uS4 family. Part of the 30S ribosomal subunit. Contacts protein S5. The interaction surface between S4 and S5 is involved in control of translational fidelity.

Functionally, one of the primary rRNA binding proteins, it binds directly to 16S rRNA where it nucleates assembly of the body of the 30S subunit. In terms of biological role, with S5 and S12 plays an important role in translational accuracy. This chain is Small ribosomal subunit protein uS4, found in Histophilus somni (strain 2336) (Haemophilus somnus).